The following is a 285-amino-acid chain: MVKRSRATRLSPSIWSGWESPQCRSIRARLLLPRGRSRPPNADCCWNQLAVTPDTRMPASSAAGRDAAAYDAWYDSPTGRPILATEVAALRPLIEVFAQPRLEIGVGTGRFADLLGVRFGLDPSRDALMFARRRGVLVANAVGEAVPFVSRHFGAVLMAFTLCFVTDPAAIFRETRRLLADGGGLVIGFLPRGTPWADLYALRAARGQPGYRDARFYTAAELEQLLADSGFRVIARRCTLHQPPGLARYDIEAAHDGIQAGAGFVAISAVDQAHEPKDDHPLESE.

This sequence belongs to the methyltransferase superfamily.

This is an uncharacterized protein from Mycobacterium tuberculosis (strain CDC 1551 / Oshkosh).